The chain runs to 440 residues: D-serine dehydratase (440 aa).

Lys116 carries the post-translational modification N6-(pyridoxal phosphate)lysine.

This sequence belongs to the serine/threonine dehydratase family. DsdA subfamily. In terms of assembly, monomer. It depends on pyridoxal 5'-phosphate as a cofactor.

The catalysed reaction is D-serine = pyruvate + NH4(+). This chain is D-serine dehydratase, found in Salmonella typhi.